The following is a 951-amino-acid chain: Valine--tRNA ligase (951 aa).

The 'HIGH' region motif lies at 42 to 52; it reads PNVTGSLHMGH. The short motif at 554 to 558 is the 'KMSKS' region element; sequence KMSKS. Position 557 (K557) interacts with ATP. Residues 880-944 are a coiled coil; that stretch reads AGLINKEDEL…AEAKAKLIEQ (65 aa).

The protein belongs to the class-I aminoacyl-tRNA synthetase family. ValS type 1 subfamily. As to quaternary structure, monomer.

It localises to the cytoplasm. It catalyses the reaction tRNA(Val) + L-valine + ATP = L-valyl-tRNA(Val) + AMP + diphosphate. In terms of biological role, catalyzes the attachment of valine to tRNA(Val). As ValRS can inadvertently accommodate and process structurally similar amino acids such as threonine, to avoid such errors, it has a 'posttransfer' editing activity that hydrolyzes mischarged Thr-tRNA(Val) in a tRNA-dependent manner. This chain is Valine--tRNA ligase, found in Salmonella paratyphi A (strain ATCC 9150 / SARB42).